The chain runs to 410 residues: Multifunctional CCA protein (410 aa).

Gly8 and Arg11 together coordinate ATP. Residues Gly8 and Arg11 each coordinate CTP. Mg(2+)-binding residues include Asp21 and Asp23. Arg91, Arg137, and Arg140 together coordinate ATP. Positions 91, 137, and 140 each coordinate CTP. The region spanning 225 to 326 (SGIHTLMTLQ…LNVLKKTDAF (102 aa)) is the HD domain.

It belongs to the tRNA nucleotidyltransferase/poly(A) polymerase family. Bacterial CCA-adding enzyme type 1 subfamily. As to quaternary structure, monomer. Can also form homodimers and oligomers. Mg(2+) is required as a cofactor. The cofactor is Ni(2+).

The enzyme catalyses a tRNA precursor + 2 CTP + ATP = a tRNA with a 3' CCA end + 3 diphosphate. It carries out the reaction a tRNA with a 3' CCA end + 2 CTP + ATP = a tRNA with a 3' CCACCA end + 3 diphosphate. In terms of biological role, catalyzes the addition and repair of the essential 3'-terminal CCA sequence in tRNAs without using a nucleic acid template. Adds these three nucleotides in the order of C, C, and A to the tRNA nucleotide-73, using CTP and ATP as substrates and producing inorganic pyrophosphate. tRNA 3'-terminal CCA addition is required both for tRNA processing and repair. Also involved in tRNA surveillance by mediating tandem CCA addition to generate a CCACCA at the 3' terminus of unstable tRNAs. While stable tRNAs receive only 3'-terminal CCA, unstable tRNAs are marked with CCACCA and rapidly degraded. The polypeptide is Multifunctional CCA protein (Neisseria gonorrhoeae (strain ATCC 700825 / FA 1090)).